We begin with the raw amino-acid sequence, 293 residues long: 4-hydroxy-tetrahydrodipicolinate synthase (293 aa).

Thr-47 contacts pyruvate. Catalysis depends on Tyr-135, which acts as the Proton donor/acceptor. Lys-163 acts as the Schiff-base intermediate with substrate in catalysis. Ile-204 is a pyruvate binding site.

This sequence belongs to the DapA family. As to quaternary structure, homotetramer; dimer of dimers.

The protein resides in the cytoplasm. It catalyses the reaction L-aspartate 4-semialdehyde + pyruvate = (2S,4S)-4-hydroxy-2,3,4,5-tetrahydrodipicolinate + H2O + H(+). It functions in the pathway amino-acid biosynthesis; L-lysine biosynthesis via DAP pathway; (S)-tetrahydrodipicolinate from L-aspartate: step 3/4. In terms of biological role, catalyzes the condensation of (S)-aspartate-beta-semialdehyde [(S)-ASA] and pyruvate to 4-hydroxy-tetrahydrodipicolinate (HTPA). This is 4-hydroxy-tetrahydrodipicolinate synthase from Brachyspira hyodysenteriae (strain ATCC 49526 / WA1).